We begin with the raw amino-acid sequence, 188 residues long: uncharacterized protein (188 aa).

The chain crosses the membrane as a helical span at residues 136 to 156; the sequence is TLVKLLLLFLSLMVVIVGVWW.

It is found in the host membrane. This is an uncharacterized protein from Magallana gigas (Pacific oyster).